Here is a 210-residue protein sequence, read N- to C-terminus: DNA replication complex GINS protein PSF3 (210 aa).

The protein belongs to the GINS3/PSF3 family. In terms of assembly, component of the GINS complex which is a heterotetramer of gins1/psf1, gins2/psf2, gins3/psf3 and gins4/sld5. Component of the CMG helicase complex, composed of the mcm2-7 complex, the GINS complex and cdc45.

It is found in the nucleus. It localises to the chromosome. Required for correct functioning of the GINS complex, a complex that plays an essential role in the initiation of DNA replication, and progression of DNA replication forks. GINS complex is a core component of CDC45-MCM-GINS (CMG) helicase, the molecular machine that unwinds template DNA during replication, and around which the replisome is built. This Xenopus laevis (African clawed frog) protein is DNA replication complex GINS protein PSF3.